The following is a 465-amino-acid chain: Ribulose bisphosphate carboxylase large chain (465 aa).

Lysine 4 is modified (N6,N6,N6-trimethyllysine). Residues asparagine 113 and threonine 163 each contribute to the substrate site. The active-site Proton acceptor is lysine 165. Lysine 167 lines the substrate pocket. Mg(2+)-binding residues include lysine 191, aspartate 193, and glutamate 194. An N6-carboxylysine modification is found at lysine 191. Histidine 284 functions as the Proton acceptor in the catalytic mechanism. Residues arginine 285, histidine 317, and serine 369 each coordinate substrate.

This sequence belongs to the RuBisCO large chain family. Type I subfamily. In terms of assembly, heterohexadecamer of 8 large chains and 8 small chains; disulfide-linked. The disulfide link is formed within the large subunit homodimers. Mg(2+) is required as a cofactor. Post-translationally, the disulfide bond which can form in the large chain dimeric partners within the hexadecamer appears to be associated with oxidative stress and protein turnover.

The protein resides in the plastid. Its subcellular location is the chloroplast. The catalysed reaction is 2 (2R)-3-phosphoglycerate + 2 H(+) = D-ribulose 1,5-bisphosphate + CO2 + H2O. It carries out the reaction D-ribulose 1,5-bisphosphate + O2 = 2-phosphoglycolate + (2R)-3-phosphoglycerate + 2 H(+). In terms of biological role, ruBisCO catalyzes two reactions: the carboxylation of D-ribulose 1,5-bisphosphate, the primary event in carbon dioxide fixation, as well as the oxidative fragmentation of the pentose substrate in the photorespiration process. Both reactions occur simultaneously and in competition at the same active site. This chain is Ribulose bisphosphate carboxylase large chain, found in Morus rubra (Red mulberry).